We begin with the raw amino-acid sequence, 551 residues long: MFS efflux transporter aclA (551 aa).

The next 8 helical transmembrane spans lie at 26 to 46, 64 to 84, 93 to 113, 125 to 145, 154 to 174, 181 to 201, 220 to 240, and 251 to 271; these read WAVF…ITAI, VWIA…IGQI, PMII…GATS, GLGA…LVPL, IALS…GALV, WVFY…VLCL, WVGN…LVIG, and VLVP…FEAS. Asn-286 carries N-linked (GlcNAc...) asparagine glycosylation. 6 helical membrane passes run 294–314, 327–347, 356–376, 385–405, 420–440, and 492–512; these read VLAF…TLFF, VDVI…GAIM, LHWA…TWDA, ILQC…LPAI, AYAF…AVVF, and LRTV…LVVV.

Belongs to the major facilitator superfamily.

It is found in the membrane. MFS efflux transporter; part of the gene cluster that mediates the biosynthesis of aspirochlorine (or antibiotic A30641), an unusual halogenated spiro compound with distinctive antifungal properties due to selective inhibition of protein biosynthesis, and which is also active against bacteria, viruses, and murine tumor cells. This Aspergillus oryzae (strain ATCC 42149 / RIB 40) (Yellow koji mold) protein is MFS efflux transporter aclA.